The primary structure comprises 496 residues: Glycerol kinase (496 aa).

Thr-12 serves as a coordination point for ADP. Residues Thr-12, Thr-13, and Ser-14 each contribute to the ATP site. Thr-12 lines the sn-glycerol 3-phosphate pocket. Arg-16 serves as a coordination point for ADP. Residues Arg-82, Glu-83, and Tyr-134 each coordinate sn-glycerol 3-phosphate. Glycerol-binding residues include Arg-82, Glu-83, and Tyr-134. His-230 bears the Phosphohistidine; by HPr mark. Residue Asp-244 coordinates sn-glycerol 3-phosphate. The glycerol site is built by Asp-244 and Gln-245. ADP-binding residues include Thr-266 and Gly-309. ATP is bound by residues Thr-266, Gly-309, Gln-313, and Gly-410. ADP is bound by residues Gly-410 and Asn-414.

This sequence belongs to the FGGY kinase family. Homotetramer and homodimer (in equilibrium). In terms of processing, the phosphoenolpyruvate-dependent sugar phosphotransferase system (PTS), including enzyme I, and histidine-containing protein (HPr) are required for the phosphorylation, which leads to the activation of the enzyme.

The catalysed reaction is glycerol + ATP = sn-glycerol 3-phosphate + ADP + H(+). It participates in polyol metabolism; glycerol degradation via glycerol kinase pathway; sn-glycerol 3-phosphate from glycerol: step 1/1. With respect to regulation, activated by phosphorylation and inhibited by fructose 1,6-bisphosphate (FBP). In terms of biological role, key enzyme in the regulation of glycerol uptake and metabolism. Catalyzes the phosphorylation of glycerol to yield sn-glycerol 3-phosphate. The sequence is that of Glycerol kinase from Bacillus cytotoxicus (strain DSM 22905 / CIP 110041 / 391-98 / NVH 391-98).